Reading from the N-terminus, the 115-residue chain is Putative ethidium bromide resistance protein (115 aa).

4 helical membrane-spanning segments follow: residues 4 to 21 (WLFL…TSAL), 30 to 47 (LAPS…FYFL), 58 to 79 (VAYA…WLLH), and 85 to 104 (AWGF…ARSP).

Belongs to the drug/metabolite transporter (DMT) superfamily. Small multidrug resistance (SMR) (TC 2.A.7.1) family.

The protein localises to the cell membrane. Its function is as follows. One of the determinants for resistance to ethidium bromide and quaternary ammonium compounds. This is Putative ethidium bromide resistance protein (ebr) from Escherichia coli.